Consider the following 449-residue polypeptide: UDP-N-acetylmuramoylalanine--D-glutamate ligase (449 aa).

119 to 125 (GTNGKTT) contacts ATP.

This sequence belongs to the MurCDEF family.

It is found in the cytoplasm. The catalysed reaction is UDP-N-acetyl-alpha-D-muramoyl-L-alanine + D-glutamate + ATP = UDP-N-acetyl-alpha-D-muramoyl-L-alanyl-D-glutamate + ADP + phosphate + H(+). It functions in the pathway cell wall biogenesis; peptidoglycan biosynthesis. Its function is as follows. Cell wall formation. Catalyzes the addition of glutamate to the nucleotide precursor UDP-N-acetylmuramoyl-L-alanine (UMA). The chain is UDP-N-acetylmuramoylalanine--D-glutamate ligase from Lactococcus lactis subsp. cremoris (strain SK11).